The primary structure comprises 350 residues: Protein MGF 360-12L (350 aa).

The ANK repeat unit spans residues 57–89; it reads DLNTALVKAVRENNYNLIKLFAEWGANINYGLV.

This sequence belongs to the asfivirus MGF 360 family.

Functionally, plays a role in virus cell tropism, and may be required for efficient virus replication in macrophages. The polypeptide is Protein MGF 360-12L (Ornithodoros (relapsing fever ticks)).